Consider the following 291-residue polypeptide: MYIDGVFSGGGVKGIALAGAYEVLEEKGFRFKRVAGTSAGAIIAAFIASGYTSKEIHALIEEVDGEKLLDQRYSFLPLKMLQWVSIYWRLGLYKGDTIEKWIADLLRAKGIRVFGDLQKGSLRLIASDLTNGTMIVLPDDLARYGLNPDMFPVARAVRMSCSIPYFFEPIKLKTDTGTATVVDGGVLSNFPIWLFSKERKRPVIGVTLAPRERERPKKNIRNAFELFGALFETMKDAHDARHIASRYEQNIIFLPVDDVMATDFHLTQQKKLALIELGKRRTELFLKQWTY.

Positions 5–196 (GVFSGGGVKG…LSNFPIWLFS (192 aa)) constitute a PNPLA domain. The GXGXXG motif lies at 9-14 (GGGVKG). A helical membrane pass occupies residues 34 to 50 (VAGTSAGAIIAAFIASG). Residues 36–40 (GTSAG) carry the GXSXG motif. The active-site Nucleophile is the Ser38. The Proton acceptor role is filled by Asp183. Positions 183–185 (DGG) match the DGA/G motif.

The protein localises to the cell membrane. Probable lipid hydrolase. This is an uncharacterized protein from Bacillus subtilis (strain 168).